The chain runs to 461 residues: RNA-binding protein ZCH321 (461 aa).

2 C3H1-type zinc fingers span residues 63–85 and 181–208; these read LCQLFLNGRCRQGTQCHQVHAAL and ACDFKICGLHTLDRCRYAEECIFLHICK. The interval 224 to 243 is disordered; the sequence is TSQARDGGEPGPRGAKKGSV. The MKT1-binding motif motif lies at 446–451; it reads WQHNPY.

Functionally, RNA-binding protein involved in regulation of mRNA stability. Promotes mRNA stabilization by recruiting MKT1 and PBP1. Stabilizes transcripts encoding mitochondrial proteins. The chain is RNA-binding protein ZCH321 from Trypanosoma brucei brucei (strain 927/4 GUTat10.1).